The primary structure comprises 237 residues: Oligoribonuclease, mitochondrial (237 aa).

The transit peptide at 1 to 25 directs the protein to the mitochondrion; sequence MLGGSLGSRLLRGVGGSHGRFGARG. Positions 43 to 207 constitute an Exonuclease domain; that stretch reads MVWVDLEMTG…DDISESIKEL (165 aa). 2 residues coordinate Mg(2+): Asp47 and Glu49. At Ser92 the chain carries Phosphoserine. Tyr122 bears the Phosphotyrosine mark. Asp147 is a Mg(2+) binding site. Lys173 bears the N6-acetyllysine mark. Residue His194 is part of the active site. Asp199 serves as a coordination point for Mg(2+).

It belongs to the oligoribonuclease family. As to quaternary structure, homodimer. Homotetramer. Mn(2+) serves as cofactor. The cofactor is Mg(2+). In terms of tissue distribution, highly expressed in the heart and at lower levels in the lymph nodes, brain, lung, liver, spleen and thymus.

Its subcellular location is the mitochondrion intermembrane space. It is found in the mitochondrion matrix. The protein localises to the mitochondrion. The protein resides in the cytoplasm. It localises to the nucleus. Inhibited by adenosine 3',5'-bisphosphate. 3'-to-5'exoribonuclease that preferentially degrades DNA and RNA oligonucleotides composed of only two nucleotides. Binds and degrades longer oligonucleotides with a lower affinity. Plays dual roles in mitochondria, scavenging nanoRNAs (small RNA oligonucleotides of &lt;5 nucleotides) that are produced by the degradosome and clearing short RNAs that are generated by RNA processing. Essential for correct initiation of mitochondrial transcription, degrading mitochondrial RNA dinucleotides to prevent RNA-primed transcription at non-canonical sites in the mitochondrial genome. Essential for embryonic development. Functionally, 3'-to-5'exoribonuclease that preferentially degrades DNA and RNA oligonucleotides composed of only two nucleotides. The protein is Oligoribonuclease, mitochondrial (REXO2) of Homo sapiens (Human).